The primary structure comprises 205 residues: Protein TK0174 (205 aa).

The region spanning 7-201 is the AMMECR1 domain; it reads EWGEFLVRLA…EEYPRGPVRR (195 aa).

This Thermococcus kodakarensis (strain ATCC BAA-918 / JCM 12380 / KOD1) (Pyrococcus kodakaraensis (strain KOD1)) protein is Protein TK0174.